Consider the following 110-residue polypeptide: MFGKSRQSSHGRTSFVDKRVATKIFIEAFEYSYTNTNAISMDKTDEFDFIKPALKPLPDARPPSLLANVMNERKRKLQNTNSTAKCLLPAPPPQLRKLEKKNHLLPLFSL.

This is an uncharacterized protein from Autographa californica nuclear polyhedrosis virus (AcMNPV).